Here is a 198-residue protein sequence, read N- to C-terminus: Na(+)-translocating NADH-quinone reductase subunit E (198 aa).

A run of 6 helical transmembrane segments spans residues 11–31 (AVFI…FLAV), 35–55 (VTTA…SVPA), 77–97 (FLNF…LEMI), 109–129 (LGIF…VSFM), 140–160 (IVYG…LASI), and 176–196 (LGIT…FSGV).

It belongs to the NqrDE/RnfAE family. In terms of assembly, composed of six subunits; NqrA, NqrB, NqrC, NqrD, NqrE and NqrF.

It localises to the cell inner membrane. The catalysed reaction is a ubiquinone + n Na(+)(in) + NADH + H(+) = a ubiquinol + n Na(+)(out) + NAD(+). In terms of biological role, NQR complex catalyzes the reduction of ubiquinone-1 to ubiquinol by two successive reactions, coupled with the transport of Na(+) ions from the cytoplasm to the periplasm. NqrA to NqrE are probably involved in the second step, the conversion of ubisemiquinone to ubiquinol. This Photorhabdus laumondii subsp. laumondii (strain DSM 15139 / CIP 105565 / TT01) (Photorhabdus luminescens subsp. laumondii) protein is Na(+)-translocating NADH-quinone reductase subunit E.